We begin with the raw amino-acid sequence, 97 residues long: F-actin-capping protein subunit beta (97 aa).

Disordered stretches follow at residues 1–27 (RLPPQQIEKSPWSNKYDPPLEDGAMPS) and 43–66 (KSGSGTMNLGGSLTRQMEKDETVS). Over residues 43–57 (KSGSGTMNLGGSLTR) the composition is skewed to polar residues. Position 97 is an N6-acetyllysine (lysine 97).

It belongs to the F-actin-capping protein beta subunit family. As to quaternary structure, component of the F-actin capping complex, composed of a heterodimer of an alpha and a beta subunit. Subunit of dynactin, a multiprotein complex part of a tripartite complex with dynein and a adapter, such as BICDL1, BICD2 or HOOK3. The dynactin complex is built around ACTR1A/ACTB filament and consists of an actin-related filament composed of a shoulder domain, a pointed end and a barbed end. Its length is defined by its flexible shoulder domain. The soulder is composed of 2 DCTN1 subunits, 4 DCTN2 and 2 DCTN3. The 4 DCNT2 (via N-terminus) bind the ACTR1A filament and act as molecular rulers to determine the length. The pointed end is important for binding dynein-dynactin cargo adapters. Consists of 4 subunits: ACTR10, DCNT4, DCTN5 and DCTN6. The barbed end is composed of a CAPZA1:CAPZB heterodimers, which binds ACTR1A/ACTB filament and dynactin and stabilizes dynactin. Interacts with ARHGAP17. Interaction with RCSD1/CAPZIP. Component of the WASH complex, composed of F-actin-capping protein subunit alpha (CAPZA1, CAPZA2 or CAPZA3), F-actin-capping protein subunit beta (CAPZB), WASH (WASHC1, WASH2P, WASH3P, WASH4P, WASH5P or WASH6P), WASHC2 (WASHC2A or WASHC2C), WASHC3, WASHC4 and WASHC5. Interacts with ACTG1. Directly interacts with CRACD; this interaction decreases binding to actin.

The protein localises to the cytoplasm. It is found in the cytoskeleton. The protein resides in the myofibril. Its subcellular location is the sarcomere. F-actin-capping proteins bind in a Ca(2+)-independent manner to the fast growing ends of actin filaments (barbed end) thereby blocking the exchange of subunits at these ends. Unlike other capping proteins (such as gelsolin and severin), these proteins do not sever actin filaments. Plays a role in the regulation of cell morphology and cytoskeletal organization. Forms, with CAPZB, the barbed end of the fast growing ends of actin filaments in the dynactin complex and stabilizes dynactin structure. The dynactin multiprotein complex activates the molecular motor dynein for ultra-processive transport along microtubules. This Mesocricetus auratus (Golden hamster) protein is F-actin-capping protein subunit beta.